We begin with the raw amino-acid sequence, 96 residues long: Myticin-A (96 aa).

The signal sequence occupies residues M1–A20. Positions V61 to L96 are cleaved as a propeptide — removed in mature form.

Contains four disulfide bonds. Hemocytes.

It is found in the secreted. Functionally, bacteriolytic activity against Gram-positive bacteria M.luteus, B.megaterium and A.viridans. The polypeptide is Myticin-A (Mytilus galloprovincialis (Mediterranean mussel)).